A 184-amino-acid polypeptide reads, in one-letter code: Thymidine kinase (184 aa).

ATP is bound by residues 15–22 (GPMFSGKS) and 89–92 (DEIQ). The active-site Proton acceptor is Glu90. The Zn(2+) site is built by Cys146, Cys149, Cys178, and Cys181.

Belongs to the thymidine kinase family. In terms of assembly, homotetramer.

It is found in the cytoplasm. The catalysed reaction is thymidine + ATP = dTMP + ADP + H(+). This is Thymidine kinase from Mesomycoplasma hyopneumoniae (strain 232) (Mycoplasma hyopneumoniae).